The sequence spans 274 residues: Acetyl-coenzyme A carboxylase carboxyl transferase subunit beta (274 aa).

Positions 16–274 (LWTKCEECKN…LLNLLFYKNA (259 aa)) constitute a CoA carboxyltransferase N-terminal domain. 4 residues coordinate Zn(2+): cysteine 20, cysteine 23, cysteine 39, and cysteine 42. The C4-type zinc finger occupies 20–42 (CEECKNILLAQELETNFYVCPKC).

It belongs to the AccD/PCCB family. In terms of assembly, acetyl-CoA carboxylase is a heterohexamer composed of biotin carboxyl carrier protein (AccB), biotin carboxylase (AccC) and two subunits each of ACCase subunit alpha (AccA) and ACCase subunit beta (AccD). Zn(2+) is required as a cofactor.

It localises to the cytoplasm. It carries out the reaction N(6)-carboxybiotinyl-L-lysyl-[protein] + acetyl-CoA = N(6)-biotinyl-L-lysyl-[protein] + malonyl-CoA. It functions in the pathway lipid metabolism; malonyl-CoA biosynthesis; malonyl-CoA from acetyl-CoA: step 1/1. In terms of biological role, component of the acetyl coenzyme A carboxylase (ACC) complex. Biotin carboxylase (BC) catalyzes the carboxylation of biotin on its carrier protein (BCCP) and then the CO(2) group is transferred by the transcarboxylase to acetyl-CoA to form malonyl-CoA. This is Acetyl-coenzyme A carboxylase carboxyl transferase subunit beta from Hydrogenobaculum sp. (strain Y04AAS1).